The sequence spans 91 residues: Acylphosphatase (91 aa).

Positions 3-90 constitute an Acylphosphatase-like domain; sequence RVSMIVSGQV…CGYSIFTIRR (88 aa). Catalysis depends on residues R18 and N36.

This sequence belongs to the acylphosphatase family.

The catalysed reaction is an acyl phosphate + H2O = a carboxylate + phosphate + H(+). This chain is Acylphosphatase (acyP), found in Methanospirillum hungatei JF-1 (strain ATCC 27890 / DSM 864 / NBRC 100397 / JF-1).